Reading from the N-terminus, the 1073-residue chain is DNA-directed RNA polymerase subunit beta (1073 aa).

Belongs to the RNA polymerase beta chain family. As to quaternary structure, in plastids the minimal PEP RNA polymerase catalytic core is composed of four subunits: alpha, beta, beta', and beta''. When a (nuclear-encoded) sigma factor is associated with the core the holoenzyme is formed, which can initiate transcription.

The protein resides in the plastid. Its subcellular location is the chloroplast. The enzyme catalyses RNA(n) + a ribonucleoside 5'-triphosphate = RNA(n+1) + diphosphate. DNA-dependent RNA polymerase catalyzes the transcription of DNA into RNA using the four ribonucleoside triphosphates as substrates. In Aethionema cordifolium (Lebanon stonecress), this protein is DNA-directed RNA polymerase subunit beta.